Here is a 1049-residue protein sequence, read N- to C-terminus: Tegument protein pp150 (1049 aa).

Disordered stretches follow at residues 397–549 (EERQ…DPRF) and 659–945 (PFRM…YPAV). Over residues 428–439 (ADEDDDDDDDDE) the composition is skewed to acidic residues. The span at 452 to 462 (SGKGAASGGGV) shows a compositional bias: gly residues. Over residues 463–474 (SSIFSGLLSSGS) the composition is skewed to low complexity. Polar residues predominate over residues 475-490 (QKPTSGPLNIPQQQQR). Basic and acidic residues predominate over residues 509 to 525 (VRRDSAWDVRPLTETRG). The segment covering 672 to 688 (TVSTTPRRPSTPRAAVT) has biased composition (low complexity). Positions 710-722 (PVEDSEEEDDDSS) are enriched in acidic residues. Polar residues predominate over residues 731–743 (GHTTPSSDYNNDV). Positions 745–757 (SPPSQTPEQSTPS) are enriched in low complexity. 3 stretches are compositionally biased toward polar residues: residues 766 to 776 (SPMTTTSTSQK), 791 to 800 (RAQTVTSTPV), and 808 to 835 (VSGT…SRNV). 4 stretches are compositionally biased toward low complexity: residues 836 to 855 (TSGA…ASAS), 866 to 884 (SPAT…SPAK), 912 to 928 (VVGR…APGR), and 936 to 945 (ASTTPTYPAV). A glycan (O-linked (GlcNAc) serine; by host) is linked at S922. O-linked (GlcNAc) serine; by host glycosylation occurs at S953. Residues 1006-1032 (DLSSPQKSGTGPQPGSAGMGGAKTPSD) form a disordered region. Positions 1008–1018 (SSPQKSGTGPQ) are enriched in polar residues.

The protein belongs to the herpesviridae large structural phosphoprotein family. As to quaternary structure, interacts with host BICD1 and RAB6A. Interacts with small capsid protein UL48A; this interaction links together the capsid and pp150. Interacts with host CCNA2. Post-translationally, phosphorylated by host CCNA2.

The protein resides in the virion tegument. It is found in the host cytoplasm. It localises to the host nucleus. Its function is as follows. Participates in the last steps of viral maturation and release. Associates with nuclear capsids prior to DNA encapsidation and later preserves the integrity of nucleocapsids through secondary envelopment at the assembly compartment. Interacts with host CCNA2 and thereby blocks the onset of lytic gene expression to promote establishment of a quiescent state of infection in undifferentiated cells. This is Tegument protein pp150 (UL32) from Homo sapiens (Human).